A 794-amino-acid polypeptide reads, in one-letter code: Furin (794 aa).

Residues 1-26 form the signal peptide; the sequence is MELRPWLLWVVAATGTLVLLAADAQG. The propeptide at 27-107 is inhibition peptide; the sequence is QKVFTNTWAV…QQVAKRRTKR (81 aa). At 108–715 the chain is on the lumenal side; sequence DVYQEPTDPK…AGLLPSHLPE (608 aa). Asp-115 is a Ca(2+) binding site. Residues 121-435 enclose the Peptidase S8 domain; it reads QWYLSGVTQR…YGLLDAGAMV (315 aa). Asp-153 functions as the Charge relay system in the catalytic mechanism. Asp-154 is a binding site for substrate. 4 residues coordinate Ca(2+): Asp-162, Asp-174, Asp-179, and Asp-181. The segment at 162-183 is disordered; that stretch reads DLAGNYDPGASFDVNDQDPDPQ. Substrate is bound at residue 191–192; that stretch reads DN. The active-site Charge relay system is His-194. Residues Val-205, Asn-208, Val-210, and Gly-212 each contribute to the Ca(2+) site. Intrachain disulfides connect Cys-211–Cys-360 and Cys-303–Cys-333. Substrate is bound by residues Glu-236, 253 to 258, Asp-264, and 292 to 295; these read SWGPED and ASGN. Asp-258 provides a ligand contact to Ca(2+). Position 301 (Asp-301) interacts with Ca(2+). Substrate contacts are provided by Asp-306 and Tyr-308. A Ca(2+)-binding site is contributed by Glu-331. The active-site Charge relay system is Ser-368. A substrate-binding site is contributed by Ser-368. Asn-387 and Asn-440 each carry an N-linked (GlcNAc...) asparagine glycan. A P/Homo B domain is found at 444–576; sequence VAPQRKCIID…TLVLYGTAPE (133 aa). The cysteines at positions 450 and 474 are disulfide-linked. The short motif at 498-500 is the Cell attachment site element; it reads RGD. N-linked (GlcNAc...) asparagine glycosylation is present at Asn-553. FU repeat units lie at residues 577–620 and 638–681; these read GLPV…GFAP and ASVC…QSQS. The segment at 673-696 is disordered; the sequence is QTCSRQSQSSRESPPQQQPPRLPP. Positions 676–687 are enriched in low complexity; the sequence is SRQSQSSRESPP. The chain crosses the membrane as a helical span at residues 716 to 738; that stretch reads VVAGLSCAFIVLVFVTVFLVLQL. Over 739-794 the chain is Cytoplasmic; that stretch reads RSGFSFRGVKVYTMDRGLISYKGLPPEAWQEECPSDSEEDEGRGERTAFIKDQSAL. Residues 759–762 form a cell surface signal region; the sequence is YKGL. Acidic residues predominate over residues 767-780; it reads WQEECPSDSEEDEG. The interval 767–794 is disordered; it reads WQEECPSDSEEDEGRGERTAFIKDQSAL. A phosphoserine; by CK2 mark is found at Ser-773 and Ser-775. A Trans Golgi network signal motif is present at residues 773-779; the sequence is SDSEEDE.

The protein belongs to the peptidase S8 family. Furin subfamily. Interacts with FLNA. Binds to PACS1 which mediates TGN localization and connection to clathrin adapters. Interacts with LAMP1, LAMP2 and LAMP3. Ca(2+) serves as cofactor. In terms of processing, the inhibition peptide, which plays the role of an intramolecular chaperone, is autocatalytically removed in the endoplasmic reticulum (ER) and remains non-covalently bound to furin as a potent autoinhibitor. Following transport to the trans Golgi, a second cleavage within the inhibition propeptide results in propeptide dissociation and furin activation. Phosphorylation is required for TGN localization of the endoprotease. In vivo, exists as di-, mono- and non-phosphorylated forms. As to expression, seems to be expressed ubiquitously.

The protein localises to the golgi apparatus. It localises to the trans-Golgi network membrane. It is found in the cell membrane. Its subcellular location is the secreted. The protein resides in the endosome membrane. The catalysed reaction is Release of mature proteins from their proproteins by cleavage of -Arg-Xaa-Yaa-Arg-|-Zaa- bonds, where Xaa can be any amino acid and Yaa is Arg or Lys. Releases albumin, complement component C3 and von Willebrand factor from their respective precursors.. Its activity is regulated as follows. Inhibited by the not secondly cleaved propeptide. Inhibited by m-guanidinomethyl-phenylacetyl-Arg-Val-Arg-(amidomethyl)-benzamidine (m-guanidinomethyl-Phac-RVR-Amb) and 4-guanidinomethyl-phenylacetyl-Arg-Tle-Arg-4-amidinobenzylamide (MI-1148). Inhibited by Decanoyl-Arg-Val-Lys-Arg-chloromethylketone (decanoyl-RVKR-CMK). Inhibited by heparin/heparan sulfate-binding. In terms of biological role, ubiquitous endoprotease within constitutive secretory pathways capable of cleavage at the RX(K/R)R consensus motif. Mediates processing of TGFB1, an essential step in TGF-beta-1 activation. Converts through proteolytic cleavage the non-functional Brain natriuretic factor prohormone into its active hormone BNP(1-32). By mediating processing of accessory subunit ATP6AP1/Ac45 of the V-ATPase, regulates the acidification of dense-core secretory granules in islets of Langerhans cells. Functionally, (Microbial infection) Cleaves and activates diphtheria toxin DT. (Microbial infection) Cleaves and activates anthrax toxin protective antigen (PA). Its function is as follows. (Microbial infection) Cleaves and activates HIV-1 virus Envelope glycoprotein gp160. In terms of biological role, (Microbial infection) Required for H7N1 and H5N1 influenza virus infection probably by cleaving hemagglutinin. Functionally, (Microbial infection) Able to cleave S.pneumoniae serine-rich repeat protein PsrP. (Microbial infection) Facilitates human coronaviruses EMC and SARS-CoV-2 infections by proteolytically cleaving the spike protein at the monobasic S1/S2 cleavage site. This cleavage is essential for spike protein-mediated cell-cell fusion and entry into human lung cells. Its function is as follows. (Microbial infection) Facilitates mumps virus infection by proteolytically cleaving the viral fusion protein F. The protein is Furin of Homo sapiens (Human).